The chain runs to 360 residues: DNA replication and repair protein RecF (360 aa).

ATP is bound at residue Gly33–Thr40.

It belongs to the RecF family.

The protein localises to the cytoplasm. In terms of biological role, the RecF protein is involved in DNA metabolism; it is required for DNA replication and normal SOS inducibility. RecF binds preferentially to single-stranded, linear DNA. It also seems to bind ATP. The sequence is that of DNA replication and repair protein RecF from Rickettsia akari (strain Hartford).